A 428-amino-acid polypeptide reads, in one-letter code: Aspartate--tRNA(Asp) ligase (428 aa).

Glu166 serves as a coordination point for L-aspartate. Residues 188-191 (QLYK) are aspartate. Arg210 lines the L-aspartate pocket. Residues 210-212 (RAE), 218-220 (RHL), and Glu351 contribute to the ATP site. Mg(2+) is bound by residues Glu351 and Ser354. L-aspartate-binding residues include Ser354 and Arg358. An ATP-binding site is contributed by 399–402 (GLER).

Belongs to the class-II aminoacyl-tRNA synthetase family. Type 2 subfamily. As to quaternary structure, homodimer. Mg(2+) is required as a cofactor.

The protein localises to the cytoplasm. It carries out the reaction tRNA(Asp) + L-aspartate + ATP = L-aspartyl-tRNA(Asp) + AMP + diphosphate. Catalyzes the attachment of L-aspartate to tRNA(Asp) in a two-step reaction: L-aspartate is first activated by ATP to form Asp-AMP and then transferred to the acceptor end of tRNA(Asp). The polypeptide is Aspartate--tRNA(Asp) ligase (Thermoplasma acidophilum (strain ATCC 25905 / DSM 1728 / JCM 9062 / NBRC 15155 / AMRC-C165)).